The primary structure comprises 274 residues: MQKVVKLHNIKIGNDLPFILIAGPCQIEGQDHALFMAEKLVKLTSKLDIPFIYKSSFDKANRTSINGVRGLGIEKGLEVLSKVKAEFDCPIVTDVHSESQCTETARVVDILQIPAFLCRQTDLLQAAAKTGKIVKVKKGQFLAPWDMKNVQTKLKAFGAENILFTERGTCFGYNNLVSDMRSLAIMAKLNVPVIFDATHSVQQPGGLGDSTGGERKYVELLAKAATTVGIAGMYMEVHQDPDNAPSDGPCMIKLDNLESILIKLKKYDKITKEK.

This sequence belongs to the KdsA family.

The protein resides in the cytoplasm. It catalyses the reaction D-arabinose 5-phosphate + phosphoenolpyruvate + H2O = 3-deoxy-alpha-D-manno-2-octulosonate-8-phosphate + phosphate. It participates in carbohydrate biosynthesis; 3-deoxy-D-manno-octulosonate biosynthesis; 3-deoxy-D-manno-octulosonate from D-ribulose 5-phosphate: step 2/3. It functions in the pathway bacterial outer membrane biogenesis; lipopolysaccharide biosynthesis. This chain is 2-dehydro-3-deoxyphosphooctonate aldolase, found in Rickettsia canadensis (strain McKiel).